A 195-amino-acid polypeptide reads, in one-letter code: Protein GrpE (195 aa).

Positions 1-24 (MSSKEQNTPDEQVSQESEMEQGQQ) are enriched in polar residues. The segment at 1-40 (MSSKEQNTPDEQVSQESEMEQGQQAEAAPETVDVVDPRDE) is disordered.

Belongs to the GrpE family. As to quaternary structure, homodimer.

It localises to the cytoplasm. In terms of biological role, participates actively in the response to hyperosmotic and heat shock by preventing the aggregation of stress-denatured proteins, in association with DnaK and GrpE. It is the nucleotide exchange factor for DnaK and may function as a thermosensor. Unfolded proteins bind initially to DnaJ; upon interaction with the DnaJ-bound protein, DnaK hydrolyzes its bound ATP, resulting in the formation of a stable complex. GrpE releases ADP from DnaK; ATP binding to DnaK triggers the release of the substrate protein, thus completing the reaction cycle. Several rounds of ATP-dependent interactions between DnaJ, DnaK and GrpE are required for fully efficient folding. The sequence is that of Protein GrpE from Sodalis glossinidius (strain morsitans).